The chain runs to 231 residues: MAATLLDVCAVVPAAGFGRRMQTECPKQYLSIGNKTILEHSVHALLAHPRVTRVVIAISPGDSRFAELPLAQHPQVTVVDGGDERADSVLAGLRAAGDAQWVLVHDAARPCLHQDDLARLLSLSETSRTGGILAAPVRDTMKRAEPGKAAIAHTVERTDLWHALTPQFFPRELLHDCLSRALNEGATITDEASALEYCGFHPQLVEGRADNIKVTRPEDLALAEFYLTRTI.

This sequence belongs to the IspD/TarI cytidylyltransferase family. IspD subfamily. Homodimer.

It carries out the reaction 2-C-methyl-D-erythritol 4-phosphate + CTP + H(+) = 4-CDP-2-C-methyl-D-erythritol + diphosphate. It participates in isoprenoid biosynthesis; isopentenyl diphosphate biosynthesis via DXP pathway; isopentenyl diphosphate from 1-deoxy-D-xylulose 5-phosphate: step 2/6. Catalyzes the formation of 4-diphosphocytidyl-2-C-methyl-D-erythritol from CTP and 2-C-methyl-D-erythritol 4-phosphate (MEP). The protein is 2-C-methyl-D-erythritol 4-phosphate cytidylyltransferase of Citrobacter koseri (strain ATCC BAA-895 / CDC 4225-83 / SGSC4696).